The primary structure comprises 432 residues: Enolase (432 aa).

Glutamine 163 provides a ligand contact to (2R)-2-phosphoglycerate. Residue glutamate 205 is the Proton donor of the active site. Mg(2+)-binding residues include aspartate 242, glutamate 285, and aspartate 312. The (2R)-2-phosphoglycerate site is built by lysine 337, arginine 366, serine 367, and lysine 388. Lysine 337 acts as the Proton acceptor in catalysis.

The protein belongs to the enolase family. It depends on Mg(2+) as a cofactor.

Its subcellular location is the cytoplasm. It localises to the secreted. The protein resides in the cell surface. It catalyses the reaction (2R)-2-phosphoglycerate = phosphoenolpyruvate + H2O. The protein operates within carbohydrate degradation; glycolysis; pyruvate from D-glyceraldehyde 3-phosphate: step 4/5. In terms of biological role, catalyzes the reversible conversion of 2-phosphoglycerate (2-PG) into phosphoenolpyruvate (PEP). It is essential for the degradation of carbohydrates via glycolysis. The sequence is that of Enolase from Bifidobacterium longum (strain DJO10A).